A 724-amino-acid polypeptide reads, in one-letter code: MATVPTPSEAHGGATPTAADVEMVEASELRRRGKPSGDRATGPSRDGAAAAAEEAAAPSVERVFADRPVPSWREQLTVRAFVVSFFLVIMFSVIVMKLNLTTGIIPSLNVSAGLLGFFFVRLWTAAIERVGLLRQPFTRQENTVIQTCVVAGYDIAFSGGFGNYILSMSERIAGLGTEANNAQNIKNPHLGWIIGFLFLVSFIGLFGLVPLRKVMIIDYKLTYPSGTATAFLINGFHTPHGAKIAAKQVKKLGIFFILSFFWGFFQWFYTATDDCGFHKFPSLGLQAFQHKFFFDFSPTYVGVGMICPHIVNVSVLLGGILSWGIMWPLIAKKRGDWFSADLPDGSLHGMQGYRVFIAIALILGDGLYNFLKMIILTAFSLRSQIKKKNASTLPVSDDGMVTTTAAVSYDEERRNELFVKDQIPWYVAYGGYAVVAAISIGTVPQIIPQLKWYQILVAYIVAPILAFCNAYGTGLTDWSLVTTYGKLAIFAFGAWTGASHGGVLAGLAACGVMMNIVSTAADLMQDFKTGYLTLASPRSMFVSQVIGTAMGCVIAPCVFWLFYKAFDNIGISGSDYPAPNAAVFRSIAILGVDGFSSLPKNCLNLCYAFFAAAIVVNLIRDLVPKVSRFIPIPMAMAIPFYIGSYFAIDMFIGTVILFVWQRVDRAKADTYGPAVASGMICGDGIWVLPQSVLALAKVKPPICMKFLSRRTNDKVDAFLTTLGK.

Positions 1–54 are disordered; sequence MATVPTPSEAHGGATPTAADVEMVEASELRRRGKPSGDRATGPSRDGAAAAAEE. Helical transmembrane passes span 80–100, 103–123, 148–168, 190–210, 252–272, 310–330, 355–375, 423–443, 455–475, 487–507, 541–561, 603–623, 640–660, and 675–695; these read AFVVSFFLVIMFSVIVMKLNL, GIIPSLNVSAGLLGFFFVRLW, CVVAGYDIAFSGGFGNYILSM, LGWIIGFLFLVSFIGLFGLVP, LGIFFILSFFWGFFQWFYTAT, IVNVSVLLGGILSWGIMWPLI, VFIAIALILGDGLYNFLKMII, IPWYVAYGGYAVVAAISIGTV, ILVAYIVAPILAFCNAYGTGL, LAIFAFGAWTGASHGGVLAGL, FVSQVIGTAMGCVIAPCVFWL, LNLCYAFFAAAIVVNLIRDLV, FYIGSYFAIDMFIGTVILFVW, and VASGMICGDGIWVLPQSVLAL.

This sequence belongs to the YSL (TC 2.A.67.2) family. In terms of tissue distribution, expressed in leaves and at low levels in root cortex.

The protein localises to the membrane. Its function is as follows. May be involved in the transport of nicotianamine-chelated metals. This chain is Probable metal-nicotianamine transporter YSL13 (YSL13), found in Oryza sativa subsp. japonica (Rice).